A 281-amino-acid chain; its full sequence is Glyoxalase 1 (281 aa).

VOC domains follow at residues 4–127 (RALH…IGKA) and 132–251 (KVLR…FVGD).

This sequence belongs to the glyoxalase I family.

Its function is as follows. Thought to act as a glyoxalase. May remove methylglyoxal from mitochondrial proteins. Has roles in reducing oxidative stress and increasing lifespan. The chain is Glyoxalase 1 from Caenorhabditis briggsae.